A 940-amino-acid chain; its full sequence is Isoleucine--tRNA ligase (940 aa).

Positions P58 to H68 match the 'HIGH' region motif. E564 is a binding site for L-isoleucyl-5'-AMP. Positions K605–S609 match the 'KMSKS' region motif. ATP is bound at residue K608. C903, C906, C923, and C926 together coordinate Zn(2+).

Belongs to the class-I aminoacyl-tRNA synthetase family. IleS type 1 subfamily. In terms of assembly, monomer. Requires Zn(2+) as cofactor.

Its subcellular location is the cytoplasm. The catalysed reaction is tRNA(Ile) + L-isoleucine + ATP = L-isoleucyl-tRNA(Ile) + AMP + diphosphate. Functionally, catalyzes the attachment of isoleucine to tRNA(Ile). As IleRS can inadvertently accommodate and process structurally similar amino acids such as valine, to avoid such errors it has two additional distinct tRNA(Ile)-dependent editing activities. One activity is designated as 'pretransfer' editing and involves the hydrolysis of activated Val-AMP. The other activity is designated 'posttransfer' editing and involves deacylation of mischarged Val-tRNA(Ile). The chain is Isoleucine--tRNA ligase from Shewanella pealeana (strain ATCC 700345 / ANG-SQ1).